Reading from the N-terminus, the 298-residue chain is Uricase (298 aa).

Catalysis depends on charge relay system residues lysine 18 and threonine 63. 7 residues coordinate urate: threonine 63, aspartate 64, phenylalanine 165, arginine 182, valine 229, glutamine 230, and asparagine 256. The active-site Charge relay system is the histidine 258. Positions 296-298 (ARM) match the Microbody targeting signal motif.

This sequence belongs to the uricase family. As to quaternary structure, homotetramer; dimer of dimers.

It localises to the peroxisome. It carries out the reaction urate + O2 + H2O = 5-hydroxyisourate + H2O2. It functions in the pathway purine metabolism; urate degradation; (S)-allantoin from urate: step 1/3. Competitively inhibited by xanthine. Its function is as follows. Catalyzes the oxidation of uric acid to 5-hydroxyisourate, which is further processed to form (S)-allantoin. The polypeptide is Uricase (Danio rerio (Zebrafish)).